A 543-amino-acid polypeptide reads, in one-letter code: Chaperonin GroEL (543 aa).

ATP is bound by residues 30 to 33 (TLGP), lysine 51, 87 to 91 (DGTTT), glycine 415, 480 to 482 (NAL), and aspartate 496.

This sequence belongs to the chaperonin (HSP60) family. As to quaternary structure, forms a cylinder of 14 subunits composed of two heptameric rings stacked back-to-back. Interacts with the co-chaperonin GroES.

It localises to the cytoplasm. It carries out the reaction ATP + H2O + a folded polypeptide = ADP + phosphate + an unfolded polypeptide.. Its function is as follows. Together with its co-chaperonin GroES, plays an essential role in assisting protein folding. The GroEL-GroES system forms a nano-cage that allows encapsulation of the non-native substrate proteins and provides a physical environment optimized to promote and accelerate protein folding. The protein is Chaperonin GroEL of Gemmatimonas aurantiaca (strain DSM 14586 / JCM 11422 / NBRC 100505 / T-27).